Consider the following 594-residue polypeptide: Sucrose transport protein SUC3 (594 aa).

The residue at position 2 (Ser2) is an N-acetylserine. Over 2–58 (SDSVSISVPYRNLRKEIELETVTKHRQNESGSSSFSESASPSNHSDSADGESVSKNC) the chain is Cytoplasmic. Residues 23-50 (VTKHRQNESGSSSFSESASPSNHSDSAD) form a disordered region. Positions 31-46 (SGSSSFSESASPSNHS) are enriched in low complexity. Residues 59-79 (SLVTLVLSCTVAAGVQFGWAL) traverse the membrane as a helical segment. Residues 80–98 (QLSLLTPYIQTLGISHAFS) are Extracellular-facing. A helical transmembrane segment spans residues 99–119 (SFIWLCGPITGLVVQPFVGIW). At 120–131 (SDKCTSKYGRRR) the chain is on the cytoplasmic side. A helical membrane pass occupies residues 132–152 (PFILVGSFMISIAVIIIGFSA). Residues 153–174 (DIGYLLGDSKEHCSTFKGTRTR) lie on the Extracellular side of the membrane. Residues 175-195 (AAVVFIIGFWLLDLANNTVQG) form a helical membrane-spanning segment. Topologically, residues 196 to 214 (PARALLADLSGPDQRNTAN) are cytoplasmic. A helical transmembrane segment spans residues 215–235 (AVFCLWMAIGNILGFSAGASG). Topologically, residues 236–257 (KWQEWFPFLTSRACCAACGNLK) are extracellular. The helical transmembrane segment at 258-278 (AAFLLAVVFLTICTLVTIYFA) threads the bilayer. The Cytoplasmic segment spans residues 279–365 (KEIPFTSNKP…LTSLRHLPPA (87 aa)). The chain crosses the membrane as a helical span at residues 366-386 (MHSVLIVMALTWLSWFPFFLF). The Extracellular segment spans residues 387–417 (DTDWMGREVYHGDPTGDSLHMELYDQGVREG). The chain crosses the membrane as a helical span at residues 418–438 (ALGLLLNSVVLGISSFLIEPM). Topologically, residues 439 to 445 (CQRMGAR) are cytoplasmic. A helical transmembrane segment spans residues 446-466 (VVWALSNFTVFACMAGTAVIS). Over 467 to 489 (LMSLSDDKNGIEYIMRGNETTRT) the chain is Extracellular. Residue Asn484 is glycosylated (N-linked (GlcNAc...) asparagine). A helical membrane pass occupies residues 490–510 (AAVIVFALLGFPLAITYSVPF). Over 511–525 (SVTAEVTADSGGGQG) the chain is Cytoplasmic. The chain crosses the membrane as a helical span at residues 526–546 (LAIGVLNLAIVIPQMIVSLGA). Topologically, residues 547–555 (GPWDQLFGG) are extracellular. The chain crosses the membrane as a helical span at residues 556–576 (GNLPAFVLASVAAFAAGVIAL). Residues 577-594 (QRLPTLSSSFKSTGFHIG) are Cytoplasmic-facing.

It belongs to the glycoside-pentoside-hexuronide (GPH) cation symporter transporter (TC 2.A.2.4) family. Homodimer. Interacts with SUC2 and SUC4. As to expression, mostly localized in parenchymatic cells next to vascular tissues (at protein level). Present in stipules, trichomes, hydathodes and guard cells of source leaves, as well as in lateral root tips and flowers.

The protein localises to the cell membrane. It carries out the reaction sucrose(out) + H(+)(out) = sucrose(in) + H(+)(in). Its pathway is glycan biosynthesis; sucrose metabolism. With respect to regulation, inhibited by protonophores (e.g. dinitrophenol and carbonyl cyanide m-chlorophenyl-hydrazone (CCCP)) and SH group inhibitors (e.g. p-chloromercuribenzene sulphonic acid (PCMBS)). Functionally, responsible for the transport of sucrose into the cell, with the concomitant uptake of protons (symport system). Can also transport maltose at a lesser rate. May also transport biotin. Probably involved in carpel maturation that leads to pod shatter and seed dispersal. The chain is Sucrose transport protein SUC3 from Arabidopsis thaliana (Mouse-ear cress).